The chain runs to 188 residues: ATP synthase subunit b (188 aa).

The chain crosses the membrane as a helical span at residues 19 to 39; it reads VYVLGATIVSFLVLFLFITYF.

The protein belongs to the ATPase B chain family. In terms of assembly, F-type ATPases have 2 components, F(1) - the catalytic core - and F(0) - the membrane proton channel. F(1) has five subunits: alpha(3), beta(3), gamma(1), delta(1), epsilon(1). F(0) has three main subunits: a(1), b(2) and c(10-14). The alpha and beta chains form an alternating ring which encloses part of the gamma chain. F(1) is attached to F(0) by a central stalk formed by the gamma and epsilon chains, while a peripheral stalk is formed by the delta and b chains.

The protein resides in the cell membrane. Its function is as follows. F(1)F(0) ATP synthase produces ATP from ADP in the presence of a proton or sodium gradient. F-type ATPases consist of two structural domains, F(1) containing the extramembraneous catalytic core and F(0) containing the membrane proton channel, linked together by a central stalk and a peripheral stalk. During catalysis, ATP synthesis in the catalytic domain of F(1) is coupled via a rotary mechanism of the central stalk subunits to proton translocation. In terms of biological role, component of the F(0) channel, it forms part of the peripheral stalk, linking F(1) to F(0). This is ATP synthase subunit b from Mesomycoplasma hyopneumoniae (strain 7448) (Mycoplasma hyopneumoniae).